Consider the following 1644-residue polypeptide: MEESKTLKSENHEPKKNVICEESKAVQVIGNQTLKARNDKSVKEIENSSPNRNSSKKNKQNDICIEKTEVKSCKVNAANLPGPKDLGLVLRDQSHCKAKKFPNSPVKAEKATISQAKSEKATSLQAKAEKSPKSPNSVKAEKASSYQMKSEKVPSSPAEAEKGPSLLLKDMRQKTELQQIGKKIPSSFTSVDKVNIEAVGGEKCALQNSPRSQKQQTCTDNTGDSDDSASGIEDVSDDLSKMKNDESNKENSSEMDYLENATVIDESALTPEQRLGLKQAEERLERDHIFRLEKRSPEYTNCRYLCKLCLIHIENIQGAHKHIKEKRHKKNILEKQEESELRSLPPPSPAHLAALSVAVIELAKEHGITDDDLRVRQEIVEEMSKVITTFLPECSLRLYGSSLTRFALKSSDVNIDIKFPPKMNHPDLLIKVLGILKKNVLYVDVESDFHAKVPVVVCRDRKSGLLCRVSAGNDMACLTTDLLTALGKIEPVFIPLVLAFRYWAKLCYIDSQTDGGIPSYCFALMVMFFLQQRKPPLLPCLLGSWIEGFDPKRMDDFQLKGIVEEKFVKWECNSSSATEKNSIAEENKAKADQPKDDTKKTETDNQSNAMKEKHGKSPLALETPNRVSLGQLWLELLKFYTLDFALEEYVICVRIQDILTRENKNWPKRRIAIEDPFSVKRNVARSLNSQLVYEYVVERFRAAYRYFACPQTKGGNKSTVDFKKREKGKISNKKPVKSNNMATNGCILLGETTEKINAEREQPVQCDEMDCTSQRCIIDNNNLLVNELDFADHGQDSSSLSTSKSSEIEPKLDKKQDDLAPSETCLKKELSQCNCIDLSKSPDPDKSTGTDCRSNLETESSHQSVCTDTSATSCNCKATEDASDLNDDDNLPTQELYYVFDKFILTSGKPPTIVCSICKKDGHSKNDCPEDFRKIDLKPLPPMTNRFREILDLVCKRCFDELSPPCSEQHNREQILIGLEKFIQKEYDEKARLCLFGSSKNGFGFRDSDLDICMTLEGHENAEKLNCKEIIENLAKILKRHPGLRNILPITTAKVPIVKFEHRRSGLEGDISLYNTLAQHNTRMLATYAAIDPRVQYLGYTMKVFAKRCDIGDASRGSLSSYAYILMVLYFLQQRKPPVIPVLQEIFDGKQIPQRMVDGWNAFFFDKTEELKKRLPSLGKNTESLGELWLGLLRFYTEEFDFKEYVISIRQKKLLTTFEKQWTSKCIAIEDPFDLNHNLGAGVSRKMTNFIMKAFINGRKLFGTPFYPLIGREAEYFFDSRVLTDGELAPNDRCCRVCGKIGHYMKDCPKRKSLLFRLKKKDSEEEKEGNEEEKDSRDVLDPRDLHDTRDFRDPRDLRCFICGDAGHVRRECPEVKLARQRNSSVAAAQLVRNLVNAQQVAGSAQQQGDQSIRTRQSSECSESPSYSPQPQPFPQNSSQSAAITQPSSQPGSQPKLGPPQQGAQPPHQVQMPLYNFPQSPPAQYSPMHNMGLLPMHPLQIPAPSWPIHGPVIHSAPGSAPSNIGLNDPSIIFAQPAARPVAIPNTSHDGHWPRTVAPNSLVNSGAVGNSEPGFRGLTPPIPWEHAPRPHFPLVPASWPYGLHQNFMHQGNARFQPNKPFYTQDRCATRRCRERCPHPPRGNVSE.

3 disordered regions span residues 31-63 (NQTL…QNDI), 96-168 (CKAK…SLLL), and 205-257 (ALQN…EMDY). Basic and acidic residues predominate over residues 36-46 (ARNDKSVKEIE). Phosphoserine is present on Ser-104. Residues 112-125 (TISQAKSEKATSLQ) are compositionally biased toward polar residues. A phosphoserine mark is found at Ser-134 and Ser-156. Residues 206 to 222 (LQNSPRSQKQQTCTDNT) are compositionally biased toward polar residues. Residues 238–252 (DLSKMKNDESNKENS) show a composition bias toward basic and acidic residues. The segment at 253 to 333 (SEMDYLENAT…KEKRHKKNIL (81 aa)) is required for interaction with LIN28A and pre-let-7 RNA. Zn(2+) contacts are provided by Cys-306, Cys-309, His-322, and His-328. Residues 579–617 (EKNSIAEENKAKADQPKDDTKKTETDNQSNAMKEKHGKS) are disordered. Positions 582–603 (SIAEENKAKADQPKDDTKKTET) are enriched in basic and acidic residues. In terms of domain architecture, PAP-associated 1 spans 628–678 (SLGQLWLELLKFYTLDFALEEYVICVRIQDILTRENKNWPKRRIAIEDPFS). The interval 794–816 (GQDSSSLSTSKSSEIEPKLDKKQ) is disordered. Residues 806-816 (SEIEPKLDKKQ) are compositionally biased toward basic and acidic residues. The segment at 901–1634 (DKFILTSGKP…CATRRCRERC (734 aa)) is sufficient for monouridylation activity. The segment at 913-930 (IVCSICKKDGHSKNDCPE) adopts a CCHC-type 1 zinc-finger fold. UTP contacts are provided by residues 998–1001 (SSKN), 1008–1011 (SDLD), Asn-1081, Lys-1103, 1121–1125 (SYAYI), and His-1237. Asp-1009 and Asp-1011 together coordinate Mg(2+). The region spanning 1184 to 1237 (SLGELWLGLLRFYTEEFDFKEYVISIRQKKLLTTFEKQWTSKCIAIEDPFDLNH) is the PAP-associated 2 domain. Residues 1293–1310 (RCCRVCGKIGHYMKDCPK) form a CCHC-type 2 zinc finger. Residues 1321–1348 (KDSEEEKEGNEEEKDSRDVLDPRDLHDT) form a disordered region. The span at 1334–1348 (KDSRDVLDPRDLHDT) shows a compositional bias: basic and acidic residues. The CCHC-type 3 zinc-finger motif lies at 1357–1374 (LRCFICGDAGHVRRECPE). The span at 1401–1426 (AGSAQQQGDQSIRTRQSSECSESPSY) shows a compositional bias: low complexity. The interval 1401 to 1482 (AGSAQQQGDQ…LYNFPQSPPA (82 aa)) is disordered. A compositionally biased stretch (polar residues) spans 1441–1452 (AAITQPSSQPGS). Low complexity predominate over residues 1453-1470 (QPKLGPPQQGAQPPHQVQ). Omega-N-methylarginine is present on Arg-1624.

This sequence belongs to the DNA polymerase type-B-like family. As to quaternary structure, interacts with LIN28A in the presence of pre-let-7 RNA. Interacts with T2BP. Interacts with MOV10; the interaction is RNA-dependent. Requires Mg(2+) as cofactor. Mn(2+) serves as cofactor.

It is found in the nucleus. It localises to the cytoplasm. Its subcellular location is the cytoplasmic ribonucleoprotein granule. It carries out the reaction RNA(n) + UTP = RNA(n)-3'-uridine ribonucleotide + diphosphate. In terms of biological role, uridylyltransferase that mediates the terminal uridylation of mRNAs with short (less than 25 nucleotides) poly(A) tails, hence facilitating global mRNA decay. Essential for both oocyte maturation and fertility. Through 3' terminal uridylation of mRNA, sculpts, with TUT7, the maternal transcriptome by eliminating transcripts during oocyte growth. Involved in microRNA (miRNA)-induced gene silencing through uridylation of deadenylated miRNA targets. Also functions as an integral regulator of microRNA biogenesis using 3 different uridylation mechanisms. Acts as a suppressor of miRNA biogenesis by mediating the terminal uridylation of some miRNA precursors, including that of let-7 (pre-let-7), miR107, miR-143 and miR-200c. Uridylated miRNAs are not processed by Dicer and undergo degradation. Degradation of pre-let-7 contributes to the maintenance of embryonic stem (ES) cell pluripotency. Also catalyzes the 3' uridylation of miR-26A, a miRNA that targets IL6 transcript. This abrogates the silencing of IL6 transcript, hence promoting cytokine expression. In the absence of LIN28A, TUT7 and TUT4 monouridylate group II pre-miRNAs, which includes most of pre-let7 members, that shapes an optimal 3' end overhang for efficient processing. Adds oligo-U tails to truncated pre-miRNAS with a 5' overhang which may promote rapid degradation of non-functional pre-miRNA species. May also suppress Toll-like receptor-induced NF-kappa-B activation via binding to T2BP. Does not play a role in replication-dependent histone mRNA degradation. Due to functional redundancy between TUT4 and TUT7, the identification of the specific role of each of these proteins is difficult. TUT4 and TUT7 restrict retrotransposition of long interspersed element-1 (LINE-1) in cooperation with MOV10 counteracting the RNA chaperonne activity of L1RE1. TUT7 uridylates LINE-1 mRNAs in the cytoplasm which inhibits initiation of reverse transcription once in the nucleus, whereas uridylation by TUT4 destabilizes mRNAs in cytoplasmic ribonucleoprotein granules. In Homo sapiens (Human), this protein is Terminal uridylyltransferase 4.